The sequence spans 256 residues: Phosphatidylglycerol--prolipoprotein diacylglyceryl transferase (256 aa).

3 helical membrane-spanning segments follow: residues 19-39 (VHWY…LGYW), 56-76 (LIFY…MLFY), and 91-111 (IWEG…AAWL). R139 is an a 1,2-diacyl-sn-glycero-3-phospho-(1'-sn-glycerol) binding site. The chain crosses the membrane as a helical span at residues 231–251 (FGWLTMGQVLSIPMLLIGIWL).

This sequence belongs to the Lgt family.

It localises to the cell inner membrane. The catalysed reaction is L-cysteinyl-[prolipoprotein] + a 1,2-diacyl-sn-glycero-3-phospho-(1'-sn-glycerol) = an S-1,2-diacyl-sn-glyceryl-L-cysteinyl-[prolipoprotein] + sn-glycerol 1-phosphate + H(+). The protein operates within protein modification; lipoprotein biosynthesis (diacylglyceryl transfer). Functionally, catalyzes the transfer of the diacylglyceryl group from phosphatidylglycerol to the sulfhydryl group of the N-terminal cysteine of a prolipoprotein, the first step in the formation of mature lipoproteins. This Legionella pneumophila subsp. pneumophila (strain Philadelphia 1 / ATCC 33152 / DSM 7513) protein is Phosphatidylglycerol--prolipoprotein diacylglyceryl transferase.